The primary structure comprises 281 residues: Small ribosomal subunit protein uS3 (281 aa).

Residues 38–106 form the KH type-2 domain; the sequence is IRRLLSTGLE…QVQLNILEVK (69 aa). The disordered stretch occupies residues 218 to 281; it reads APAGAERARR…VTHEPQIAES (64 aa). Low complexity predominate over residues 238-252; sequence SGAAGTTVTGTDAGR.

Belongs to the universal ribosomal protein uS3 family. As to quaternary structure, part of the 30S ribosomal subunit. Forms a tight complex with proteins S10 and S14.

Binds the lower part of the 30S subunit head. Binds mRNA in the 70S ribosome, positioning it for translation. This Mycobacterium leprae (strain TN) protein is Small ribosomal subunit protein uS3.